Reading from the N-terminus, the 320-residue chain is Ubiquinone biosynthesis protein COQ4, mitochondrial (320 aa).

The transit peptide at 1 to 31 (MFARSALGRSDQLVTALNSQKRQFVLTAATT) directs the protein to the mitochondrion. H205, D206, H209, and E221 together coordinate Zn(2+).

This sequence belongs to the COQ4 family. In terms of assembly, component of a multi-subunit COQ enzyme complex, composed of at least COQ3, COQ4, COQ5, COQ6, COQ7 and COQ9. The cofactor is Zn(2+).

The protein localises to the mitochondrion inner membrane. The enzyme catalyses a 4-hydroxy-3-methoxy-5-(all-trans-polyprenyl)benzoate + H(+) = a 2-methoxy-6-(all-trans-polyprenyl)phenol + CO2. It participates in cofactor biosynthesis; ubiquinone biosynthesis. Functionally, lyase that catalyzes the C1-decarboxylation of 4-hydroxy-3-methoxy-5-(all-trans-polyprenyl)benzoic acid into 2-methoxy-6-(all-trans-polyprenyl)phenol during ubiquinone biosynthesis. This is Ubiquinone biosynthesis protein COQ4, mitochondrial from Scheffersomyces stipitis (strain ATCC 58785 / CBS 6054 / NBRC 10063 / NRRL Y-11545) (Yeast).